A 90-amino-acid chain; its full sequence is Small ribosomal subunit protein uS15 (90 aa).

The protein belongs to the universal ribosomal protein uS15 family. In terms of assembly, part of the 30S ribosomal subunit. Forms a bridge to the 50S subunit in the 70S ribosome, contacting the 23S rRNA.

Functionally, one of the primary rRNA binding proteins, it binds directly to 16S rRNA where it helps nucleate assembly of the platform of the 30S subunit by binding and bridging several RNA helices of the 16S rRNA. In terms of biological role, forms an intersubunit bridge (bridge B4) with the 23S rRNA of the 50S subunit in the ribosome. The sequence is that of Small ribosomal subunit protein uS15 from Wolbachia sp. subsp. Drosophila simulans (strain wRi).